Consider the following 413-residue polypeptide: Probable N-acetyltransferase HLS1-like (413 aa).

Positions 5–187 (VEVREYDPSK…VNPVYAHRVN (183 aa)) constitute an N-acetyltransferase domain.

It belongs to the acetyltransferase family.

The sequence is that of Probable N-acetyltransferase HLS1-like from Arabidopsis thaliana (Mouse-ear cress).